An 89-amino-acid chain; its full sequence is Large ribosomal subunit protein eL34 (89 aa).

It belongs to the eukaryotic ribosomal protein eL34 family.

The protein is Large ribosomal subunit protein eL34 of Methanococcus maripaludis (strain C6 / ATCC BAA-1332).